Consider the following 330-residue polypeptide: Probable L-lactate dehydrogenase (330 aa).

The substrate site is built by arginine 105, asparagine 137, and arginine 168. Asparagine 137 serves as a coordination point for NAD(+). Histidine 192 functions as the Proton acceptor in the catalytic mechanism.

The protein belongs to the LDH/MDH superfamily. LDH family. Homotetramer.

It is found in the cytoplasm. It carries out the reaction (S)-lactate + NAD(+) = pyruvate + NADH + H(+). The protein operates within fermentation; pyruvate fermentation to lactate; (S)-lactate from pyruvate: step 1/1. This Schizosaccharomyces pombe (strain 972 / ATCC 24843) (Fission yeast) protein is Probable L-lactate dehydrogenase.